Here is a 313-residue protein sequence, read N- to C-terminus: D-alanine--D-alanine ligase (313 aa).

The 201-residue stretch at lysine 108–serine 308 folds into the ATP-grasp domain. Valine 138 to tyrosine 193 contributes to the ATP binding site. The Mg(2+) site is built by aspartate 262, glutamate 275, and asparagine 277.

It belongs to the D-alanine--D-alanine ligase family. It depends on Mg(2+) as a cofactor. Mn(2+) serves as cofactor.

The protein localises to the cytoplasm. The enzyme catalyses 2 D-alanine + ATP = D-alanyl-D-alanine + ADP + phosphate + H(+). It functions in the pathway cell wall biogenesis; peptidoglycan biosynthesis. Cell wall formation. This Burkholderia cenocepacia (strain HI2424) protein is D-alanine--D-alanine ligase.